A 669-amino-acid chain; its full sequence is DNA ligase (669 aa).

NAD(+) contacts are provided by residues 31 to 35 (DSVYD), 80 to 81 (SL), and Glu-112. Lys-114 (N6-AMP-lysine intermediate) is an active-site residue. 4 residues coordinate NAD(+): Arg-135, Glu-172, Lys-289, and Lys-313. The Zn(2+) site is built by Cys-407, Cys-410, Cys-425, and Cys-430. A BRCT domain is found at 591–669 (TDSGKLKGKT…EAEFLQLLEP (79 aa)).

This sequence belongs to the NAD-dependent DNA ligase family. LigA subfamily. Requires Mg(2+) as cofactor. Mn(2+) serves as cofactor.

The enzyme catalyses NAD(+) + (deoxyribonucleotide)n-3'-hydroxyl + 5'-phospho-(deoxyribonucleotide)m = (deoxyribonucleotide)n+m + AMP + beta-nicotinamide D-nucleotide.. DNA ligase that catalyzes the formation of phosphodiester linkages between 5'-phosphoryl and 3'-hydroxyl groups in double-stranded DNA using NAD as a coenzyme and as the energy source for the reaction. It is essential for DNA replication and repair of damaged DNA. The protein is DNA ligase of Synechocystis sp. (strain ATCC 27184 / PCC 6803 / Kazusa).